The primary structure comprises 252 residues: uncharacterized protein (252 aa).

This is an uncharacterized protein from Rickettsia prowazekii (strain Madrid E).